The chain runs to 295 residues: Probable WRKY transcription factor 46 (295 aa).

Positions 98-166 (QENGSIDDGH…YLGNHTCNNI (69 aa)) form a DNA-binding region, WRKY.

This sequence belongs to the WRKY group III family. As to quaternary structure, binds to BZR2/BES1 to cooperatively regulate the expression of target genes. Post-translationally, phosphorylated and destabilized by ASK7/BIN2. As to expression, expressed in guard cells, hypocotyls, and in the vascular tissues of cotyledon and root. Mostly expressed in roots, at lower levels in leaves and petioles, and, to a lower extent, in stems, flowers and siliques.

It localises to the nucleus. Functionally, transcription factor involved in the regulation of osmotic stress responses and stomatal movement. Interacts specifically with the W box (5'-(T)TGAC[CT]-3'), a frequently occurring elicitor-responsive cis-acting element. Positive regulator of EDS1-dependent defense against E.amylovora. Together with WRKY70 and WRKY53, promotes resistance to P.syringae, probably by enhancing salicylic acid (SA)- dependent genes. Contributes to the suppression of jasmonic acid (MeJA)-induced expression of PDF1.2. Together with WRKY54 and WRKY70, promotes brassinosteroid (BR)-regulated plant growth but prevent drought response by modulating gene expression. This Arabidopsis thaliana (Mouse-ear cress) protein is Probable WRKY transcription factor 46 (WRKY46).